The primary structure comprises 305 residues: Ribosomal protein L11 methyltransferase (305 aa).

Residues T152, G173, D195, and N237 each coordinate S-adenosyl-L-methionine.

It belongs to the methyltransferase superfamily. PrmA family.

It is found in the cytoplasm. It catalyses the reaction L-lysyl-[protein] + 3 S-adenosyl-L-methionine = N(6),N(6),N(6)-trimethyl-L-lysyl-[protein] + 3 S-adenosyl-L-homocysteine + 3 H(+). Methylates ribosomal protein L11. This Hamiltonella defensa subsp. Acyrthosiphon pisum (strain 5AT) protein is Ribosomal protein L11 methyltransferase.